The chain runs to 202 residues: ATP-dependent Clp protease proteolytic subunit (202 aa).

S106 (nucleophile) is an active-site residue. H131 is a catalytic residue.

It belongs to the peptidase S14 family. As to quaternary structure, fourteen ClpP subunits assemble into 2 heptameric rings which stack back to back to give a disk-like structure with a central cavity, resembling the structure of eukaryotic proteasomes.

It localises to the cytoplasm. The enzyme catalyses Hydrolysis of proteins to small peptides in the presence of ATP and magnesium. alpha-casein is the usual test substrate. In the absence of ATP, only oligopeptides shorter than five residues are hydrolyzed (such as succinyl-Leu-Tyr-|-NHMec, and Leu-Tyr-Leu-|-Tyr-Trp, in which cleavage of the -Tyr-|-Leu- and -Tyr-|-Trp bonds also occurs).. Its function is as follows. Cleaves peptides in various proteins in a process that requires ATP hydrolysis. Has a chymotrypsin-like activity. Plays a major role in the degradation of misfolded proteins. The chain is ATP-dependent Clp protease proteolytic subunit from Methylibium petroleiphilum (strain ATCC BAA-1232 / LMG 22953 / PM1).